Consider the following 190-residue polypeptide: Molybdenum cofactor guanylyltransferase (190 aa).

Residues L8 to G10, K20, D64, and D98 contribute to the GTP site. Residue D98 participates in Mg(2+) binding.

The protein belongs to the MobA family. Monomer. Requires Mg(2+) as cofactor.

Its subcellular location is the cytoplasm. The catalysed reaction is Mo-molybdopterin + GTP + H(+) = Mo-molybdopterin guanine dinucleotide + diphosphate. In terms of biological role, transfers a GMP moiety from GTP to Mo-molybdopterin (Mo-MPT) cofactor (Moco or molybdenum cofactor) to form Mo-molybdopterin guanine dinucleotide (Mo-MGD) cofactor. The protein is Molybdenum cofactor guanylyltransferase of Rhodobacter capsulatus (Rhodopseudomonas capsulata).